Consider the following 461-residue polypeptide: D-phenylhydantoinase (461 aa).

A divalent metal cation is bound by residues His59, His61, and Lys151. An N6-carboxylysine modification is found at Lys151. Substrate is bound at residue Tyr156. A divalent metal cation is bound by residues His182 and His239. A substrate-binding site is contributed by Ser286. Asp313 is an a divalent metal cation binding site. Asn335 serves as a coordination point for substrate.

This sequence belongs to the metallo-dependent hydrolases superfamily. Hydantoinase/dihydropyrimidinase family. As to quaternary structure, homotetramer. A divalent metal cation is required as a cofactor. Post-translationally, carboxylation allows a single lysine to coordinate two divalent metal cations.

The enzyme catalyses D-5-phenylhydantoin + H2O = N-carbamoyl-D-phenylglycine + H(+). Its function is as follows. Catalyzes the stereospecific hydrolysis of the cyclic amide bond of D-hydantoin derivatives with an aromatic side chains at the 5'-position. Has no activity on dihydropyrimidines. The physiological function is unknown. In Escherichia coli O7:K1 (strain IAI39 / ExPEC), this protein is D-phenylhydantoinase.